A 263-amino-acid polypeptide reads, in one-letter code: Endonuclease 8 (263 aa).

The Schiff-base intermediate with DNA role is filled by P2. Residue E3 is the Proton donor of the active site. The active-site Proton donor; for beta-elimination activity is the K53. The DNA site is built by Q70, R125, and N169. Residues 229–263 (KVFHRDGERCERCGGVIEKTTLSSRPFYWCPGCQH) form an FPG-type zinc finger. R253 functions as the Proton donor; for delta-elimination activity in the catalytic mechanism.

Belongs to the FPG family. Zn(2+) serves as cofactor.

It catalyses the reaction 2'-deoxyribonucleotide-(2'-deoxyribose 5'-phosphate)-2'-deoxyribonucleotide-DNA = a 3'-end 2'-deoxyribonucleotide-(2,3-dehydro-2,3-deoxyribose 5'-phosphate)-DNA + a 5'-end 5'-phospho-2'-deoxyribonucleoside-DNA + H(+). Functionally, involved in base excision repair of DNA damaged by oxidation or by mutagenic agents. Acts as a DNA glycosylase that recognizes and removes damaged bases. Has a preference for oxidized pyrimidines, such as thymine glycol, 5,6-dihydrouracil and 5,6-dihydrothymine. Has AP (apurinic/apyrimidinic) lyase activity and introduces nicks in the DNA strand. Cleaves the DNA backbone by beta-delta elimination to generate a single-strand break at the site of the removed base with both 3'- and 5'-phosphates. The chain is Endonuclease 8 from Klebsiella pneumoniae (strain 342).